Here is a 394-residue protein sequence, read N- to C-terminus: Elongation factor Tu 2 (394 aa).

Residues 10–204 enclose the tr-type G domain; it reads KPHVNVGTIG…ALDSYIPQPE (195 aa). Positions 19 to 26 are G1; it reads GHVDHGKT. Residue 19-26 participates in GTP binding; the sequence is GHVDHGKT. T26 lines the Mg(2+) pocket. The G2 stretch occupies residues 60–64; sequence GITIN. A G3 region spans residues 81–84; the sequence is DCPG. Residues 81-85 and 136-139 each bind GTP; these read DCPGH and NKCD. The interval 136-139 is G4; sequence NKCD. The G5 stretch occupies residues 174–176; that stretch reads SAL.

This sequence belongs to the TRAFAC class translation factor GTPase superfamily. Classic translation factor GTPase family. EF-Tu/EF-1A subfamily. As to quaternary structure, monomer.

It localises to the cytoplasm. The enzyme catalyses GTP + H2O = GDP + phosphate + H(+). GTP hydrolase that promotes the GTP-dependent binding of aminoacyl-tRNA to the A-site of ribosomes during protein biosynthesis. The protein is Elongation factor Tu 2 of Yersinia pestis bv. Antiqua (strain Antiqua).